We begin with the raw amino-acid sequence, 388 residues long: tRNA (guanine-N(7)-)-methyltransferase (388 aa).

S-adenosyl-L-methionine-binding residues include Glu-129, Glu-154, and Asp-181. Lys-207 and Asp-237 together coordinate substrate.

Belongs to the class I-like SAM-binding methyltransferase superfamily. TrmB family.

The enzyme catalyses guanosine(46) in tRNA + S-adenosyl-L-methionine = N(7)-methylguanosine(46) in tRNA + S-adenosyl-L-homocysteine. It functions in the pathway tRNA modification; N(7)-methylguanine-tRNA biosynthesis. In terms of biological role, catalyzes the formation of N(7)-methylguanine at position 46 (m7G46) in tRNA. The chain is tRNA (guanine-N(7)-)-methyltransferase from Wolinella succinogenes (strain ATCC 29543 / DSM 1740 / CCUG 13145 / JCM 31913 / LMG 7466 / NCTC 11488 / FDC 602W) (Vibrio succinogenes).